A 117-amino-acid chain; its full sequence is PBP1-interacting protein XAC1 (117 aa).

The segment at 1–60 is disordered; that stretch reads MSKAPSQPAKKWMSARTLAKSEDATNRKSNTAAPASQPSQQPASVMHERPTPPPPAPVQL. The span at 32 to 44 shows a compositional bias: low complexity; it reads AAPASQPSQQPAS.

In terms of assembly, forms a complex composed of at least MKT1, PBP1, XAC1 and LSM12. Forms a complex composed of at least MKT1L, PBP1, XAC1 and LSM12.

It is found in the cytoplasm. Functionally, involved in post-transcriptional regulation of gene expression. The protein is PBP1-interacting protein XAC1 of Trypanosoma brucei brucei (strain 927/4 GUTat10.1).